The chain runs to 612 residues: Kelch-like protein 40a (612 aa).

Positions 34–101 (VDCILKIKDK…IYTSDINLTE (68 aa)) constitute a BTB domain. Positions 136 to 238 (CLAIFRLGLL…PTSYFKEKVE (103 aa)) constitute a BACK domain. Residues 266–275 (RVKRSSHRKE) show a composition bias toward basic residues. The segment at 266–290 (RVKRSSHRKEGKSAEFESDDDDEDG) is disordered. Over residues 281-290 (FESDDDDEDG) the composition is skewed to acidic residues. Kelch repeat units lie at residues 350-402 (QIFV…EAEN), 403-452 (SIYV…SHKG), 453-500 (LVYV…VHKN), 502-547 (IYVV…ELGG), and 549-604 (LYAI…GVRL).

This sequence belongs to the KLHL40 family. As to quaternary structure, component of the BCR(KLHL40) E3 ubiquitin ligase complex. Expressed in skeletal muscle and heart. Detected, although at much lower levels, in brain, eye and fin.

It is found in the cytoplasm. Its subcellular location is the myofibril. The protein localises to the sarcomere. It localises to the a band. The protein resides in the i band. Substrate-specific adapter of a BCR (BTB-CUL3-RBX1) E3 ubiquitin ligase complex. Required for skeletal muscle development. In Danio rerio (Zebrafish), this protein is Kelch-like protein 40a (klhl40a).